A 413-amino-acid polypeptide reads, in one-letter code: Na(+)-translocating NADH-quinone reductase subunit B (413 aa).

Transmembrane regions (helical) follow at residues 56–76, 123–143, and 169–189; these read MMIL…YNVG, LLGA…GGFW, and IVPP…GVVI. FMN phosphoryl threonine is present on T236. Transmembrane regions (helical) follow at residues 270–290, 297–317, 322–342, 358–378, and 381–401; these read GSIG…IIFG, IVAG…WIGS, LFAM…GMIF, WWYG…NPAY, and GMML…YVVV.

Belongs to the NqrB/RnfD family. In terms of assembly, composed of six subunits; NqrA, NqrB, NqrC, NqrD, NqrE and NqrF. It depends on FMN as a cofactor.

The protein resides in the cell inner membrane. It carries out the reaction a ubiquinone + n Na(+)(in) + NADH + H(+) = a ubiquinol + n Na(+)(out) + NAD(+). NQR complex catalyzes the reduction of ubiquinone-1 to ubiquinol by two successive reactions, coupled with the transport of Na(+) ions from the cytoplasm to the periplasm. NqrA to NqrE are probably involved in the second step, the conversion of ubisemiquinone to ubiquinol. The polypeptide is Na(+)-translocating NADH-quinone reductase subunit B (Yersinia pestis).